Consider the following 596-residue polypeptide: Phosphoenolpyruvate carboxykinase [GTP] (596 aa).

Residues arginine 77 and 205-207 contribute to the substrate site; that span reads YGG. The Mn(2+) site is built by lysine 214 and histidine 234. Residue serine 256 coordinates substrate. 257–262 serves as a coordination point for GTP; it reads ACGKTN. The active site involves cysteine 258. A Mn(2+)-binding site is contributed by aspartate 283. The interval 362-388 is disordered; that stretch reads KKGSTEKAAHPNSRFTAPAKNNPAISP. 373-375 contributes to the substrate binding site; that stretch reads NSR. Residues arginine 375, arginine 406, and 499 to 502 each bind GTP; that span reads YGDN.

It belongs to the phosphoenolpyruvate carboxykinase [GTP] family. Monomer. Mn(2+) is required as a cofactor.

It localises to the cytoplasm. It carries out the reaction oxaloacetate + GTP = phosphoenolpyruvate + GDP + CO2. Its pathway is carbohydrate biosynthesis; gluconeogenesis. Its function is as follows. Catalyzes the conversion of oxaloacetate (OAA) to phosphoenolpyruvate (PEP), the rate-limiting step in the metabolic pathway that produces glucose from lactate and other precursors derived from the citric acid cycle. The sequence is that of Phosphoenolpyruvate carboxykinase [GTP] from Anaeromyxobacter dehalogenans (strain 2CP-1 / ATCC BAA-258).